Consider the following 120-residue polypeptide: NAD(P)H-quinone oxidoreductase subunit 3, chloroplastic (120 aa).

The next 3 membrane-spanning stretches (helical) occupy residues 9–29, 64–84, and 88–108; these read IFWA…LISG, MFAL…PWAM, and VLGV…ILGL.

It belongs to the complex I subunit 3 family. As to quaternary structure, NDH is composed of at least 16 different subunits, 5 of which are encoded in the nucleus.

Its subcellular location is the plastid. The protein localises to the chloroplast thylakoid membrane. It catalyses the reaction a plastoquinone + NADH + (n+1) H(+)(in) = a plastoquinol + NAD(+) + n H(+)(out). The catalysed reaction is a plastoquinone + NADPH + (n+1) H(+)(in) = a plastoquinol + NADP(+) + n H(+)(out). Functionally, NDH shuttles electrons from NAD(P)H:plastoquinone, via FMN and iron-sulfur (Fe-S) centers, to quinones in the photosynthetic chain and possibly in a chloroplast respiratory chain. The immediate electron acceptor for the enzyme in this species is believed to be plastoquinone. Couples the redox reaction to proton translocation, and thus conserves the redox energy in a proton gradient. The polypeptide is NAD(P)H-quinone oxidoreductase subunit 3, chloroplastic (Aethionema grandiflorum (Persian stone-cress)).